A 452-amino-acid chain; its full sequence is Oxygen-independent coproporphyrinogen III oxidase (452 aa).

One can recognise a Radical SAM core domain in the interval 45-278 (LDPAVPISVY…ANLAAKMFTE (234 aa)). Residue Tyr54 participates in S-adenosyl-L-methionine binding. 2 residues coordinate [4Fe-4S] cluster: Cys60 and Cys64. Phe66 contributes to the S-adenosyl-L-methionine binding site. Cys67 contacts [4Fe-4S] cluster. S-adenosyl-L-methionine contacts are provided by residues Gly111, 112–113 (GT), Glu144, Gln171, Arg183, Asp208, Ala242, and Ile328.

The protein belongs to the anaerobic coproporphyrinogen-III oxidase family. As to quaternary structure, monomer. The cofactor is [4Fe-4S] cluster.

The protein localises to the cytoplasm. It catalyses the reaction coproporphyrinogen III + 2 S-adenosyl-L-methionine = protoporphyrinogen IX + 2 5'-deoxyadenosine + 2 L-methionine + 2 CO2. Its pathway is porphyrin-containing compound metabolism; protoporphyrin-IX biosynthesis; protoporphyrinogen-IX from coproporphyrinogen-III (AdoMet route): step 1/1. Its function is as follows. Involved in the heme and chlorophyll biosynthesis. Catalyzes the anaerobic oxidative decarboxylation of propionate groups of rings A and B of coproporphyrinogen III to yield the vinyl groups in protoporphyrinogen IX. The sequence is that of Oxygen-independent coproporphyrinogen III oxidase (hemN) from Cereibacter sphaeroides (strain ATCC 17025 / ATH 2.4.3) (Rhodobacter sphaeroides).